The primary structure comprises 101 residues: NADH-quinone oxidoreductase subunit K (101 aa).

Helical transmembrane passes span 4–24 (LADY…GIFI), 30–50 (LVLL…FIAF), and 61–81 (VFVF…LAIV).

Belongs to the complex I subunit 4L family. In terms of assembly, NDH-1 is composed of 14 different subunits. Subunits NuoA, H, J, K, L, M, N constitute the membrane sector of the complex.

It localises to the cell inner membrane. The catalysed reaction is a quinone + NADH + 5 H(+)(in) = a quinol + NAD(+) + 4 H(+)(out). Its function is as follows. NDH-1 shuttles electrons from NADH, via FMN and iron-sulfur (Fe-S) centers, to quinones in the respiratory chain. The immediate electron acceptor for the enzyme in this species is believed to be ubiquinone. Couples the redox reaction to proton translocation (for every two electrons transferred, four hydrogen ions are translocated across the cytoplasmic membrane), and thus conserves the redox energy in a proton gradient. The chain is NADH-quinone oxidoreductase subunit K from Alkalilimnicola ehrlichii (strain ATCC BAA-1101 / DSM 17681 / MLHE-1).